The sequence spans 247 residues: Centromere protein H (247 aa).

Position 1 is an N-acetylmethionine (methionine 1). Residues 1 to 14 (MEEQPQMQDADEPA) show a composition bias toward acidic residues. The tract at residues 1–34 (MEEQPQMQDADEPADSGGEGRAGGPPQVAGAQAA) is disordered. At serine 16 the chain carries Phosphoserine. Low complexity predominate over residues 24–34 (GPPQVAGAQAA). Positions 47–192 (RAQTKQQLLE…KIDLDSMENS (146 aa)) form a coiled coil. Lysine 67 participates in a covalent cross-link: Glycyl lysine isopeptide (Lys-Gly) (interchain with G-Cter in SUMO2). Threonine 68 is modified (phosphothreonine).

This sequence belongs to the CENP-H/MCM16 family. In terms of assembly, self-associates. Component of the CENPA-NAC complex, at least composed of CENPA, CENPC, CENPH, CENPM, CENPN, CENPT and CENPU. The CENPA-NAC complex interacts with the CENPA-CAD complex, composed of CENPI, CENPK, CENPL, CENPO, CENPP, CENPQ, CENPR and CENPS. Interacts directly with CENPK. Interacts with KIF2C and NDC80. Interacts with TRIM36.

The protein localises to the nucleus. It localises to the chromosome. Its subcellular location is the centromere. The protein resides in the kinetochore. Component of the CENPA-NAC (nucleosome-associated) complex, a complex that plays a central role in assembly of kinetochore proteins, mitotic progression and chromosome segregation. The CENPA-NAC complex recruits the CENPA-CAD (nucleosome distal) complex and may be involved in incorporation of newly synthesized CENPA into centromeres. Required for chromosome congression and efficiently align the chromosomes on a metaphase plate. This chain is Centromere protein H, found in Homo sapiens (Human).